The sequence spans 312 residues: Acetyl-coenzyme A carboxylase carboxyl transferase subunit beta (312 aa).

The CoA carboxyltransferase N-terminal domain maps to 24-293 (LWIKCPDSGQ…VEHAKPAPQL (270 aa)). Residues 286–312 (HAKPAPQLPPPAKPAETAEAPAVATSA) are disordered. Over residues 299–312 (PAETAEAPAVATSA) the composition is skewed to low complexity.

It belongs to the AccD/PCCB family. In terms of assembly, acetyl-CoA carboxylase is a heterohexamer composed of biotin carboxyl carrier protein (AccB), biotin carboxylase (AccC) and two subunits each of ACCase subunit alpha (AccA) and ACCase subunit beta (AccD).

It localises to the cytoplasm. The catalysed reaction is N(6)-carboxybiotinyl-L-lysyl-[protein] + acetyl-CoA = N(6)-biotinyl-L-lysyl-[protein] + malonyl-CoA. It participates in lipid metabolism; malonyl-CoA biosynthesis; malonyl-CoA from acetyl-CoA: step 1/1. In terms of biological role, component of the acetyl coenzyme A carboxylase (ACC) complex. Biotin carboxylase (BC) catalyzes the carboxylation of biotin on its carrier protein (BCCP) and then the CO(2) group is transferred by the transcarboxylase to acetyl-CoA to form malonyl-CoA. This chain is Acetyl-coenzyme A carboxylase carboxyl transferase subunit beta, found in Bradyrhizobium sp. (strain ORS 278).